We begin with the raw amino-acid sequence, 345 residues long: Mycothiol acetyltransferase (345 aa).

N-acetyltransferase domains lie at aspartate 6–glutamate 149 and phenylalanine 164–leucine 345. A 1D-myo-inositol 2-(L-cysteinylamino)-2-deoxy-alpha-D-glucopyranoside-binding site is contributed by glutamate 39. Residue leucine 76–valine 78 coordinates acetyl-CoA. Positions 198, 261, and 277 each coordinate 1D-myo-inositol 2-(L-cysteinylamino)-2-deoxy-alpha-D-glucopyranoside. Residues valine 281–leucine 283 and arginine 288–glutamine 294 contribute to the acetyl-CoA site. Tyrosine 315 contacts 1D-myo-inositol 2-(L-cysteinylamino)-2-deoxy-alpha-D-glucopyranoside.

It belongs to the acetyltransferase family. MshD subfamily. As to quaternary structure, monomer.

The enzyme catalyses 1D-myo-inositol 2-(L-cysteinylamino)-2-deoxy-alpha-D-glucopyranoside + acetyl-CoA = mycothiol + CoA + H(+). Functionally, catalyzes the transfer of acetyl from acetyl-CoA to desacetylmycothiol (Cys-GlcN-Ins) to form mycothiol. This is Mycothiol acetyltransferase from Corynebacterium jeikeium (strain K411).